A 2661-amino-acid chain; its full sequence is 3-methylorcinaldehyde synthase tropA (2661 aa).

Residues 14–271 (LLFGSQSLSF…HWSGHEAEVD (258 aa)) are N-terminal acylcarrier protein transacylase domain (SAT). The Ketosynthase family 3 (KS3) domain occupies 380 to 796 (GDDIAIVGAS…GSNASMVITQ (417 aa)). Residues Cys-545, His-680, and His-719 each act as for beta-ketoacyl synthase activity in the active site. Positions 901 to 1211 (LCFGGQVSTF…QAMSITTDKG (311 aa)) are malonyl-CoA:ACP transacylase (MAT) domain. The active-site For acyl/malonyl transferase activity is Ser-988. The segment at 1283–1425 (PDTILSFVGY…GTLVVVPMED (143 aa)) is N-terminal hotdog fold. A PKS/mFAS DH domain is found at 1283-1600 (PDTILSFVGY…FVRIPRKGLA (318 aa)). The tract at residues 1288 to 1599 (SFVGYQDSNK…QFVRIPRKGL (312 aa)) is product template (PT) domain. His-1318 serves as the catalytic Proton acceptor; for dehydratase activity. The C-terminal hotdog fold stretch occupies residues 1453-1600 (AEEILQGRTI…FVRIPRKGLA (148 aa)). Asp-1509 serves as the catalytic Proton donor; for dehydratase activity. The tract at residues 1614 to 1656 (ATNAQSRAIPPPSTNTTQSSSQQTPIPKAAAPKKEKKRPGNPK) is disordered. A compositionally biased stretch (low complexity) spans 1627-1643 (TNTTQSSSQQTPIPKAA). Residues 1654–1731 (NPKLDVLPKL…QLVRVVESIV (78 aa)) form the Carrier 1 domain. The residue at position 1691 (Ser-1691) is an O-(pantetheine 4'-phosphoryl)serine. The segment at 1734–1762 (EGSETSNLSSDDDDENGTPSTPETDLSDA) is disordered. One can recognise a Carrier 2 domain in the interval 1764-1841 (VDAVVDNAEL…DLRQTAPGAA (78 aa)). Ser-1801 carries the post-translational modification O-(pantetheine 4'-phosphoryl)serine. Residues 1998–2231 (QYQNVNELIF…GFGRVDWSDG (234 aa)) are methyltransferase (CMeT) domain. The segment at 2271-2659 (GVDLLSPAIR…FISYWRSISF (389 aa)) is thioesterase (TE) domain.

It functions in the pathway secondary metabolite biosynthesis. In terms of biological role, non-reducing polyketide synthase; part of the gene cluster that mediates the biosynthesis of the tropolone class of fungal maleic anhydrides. The pathway begins with the synthesis of 3-methylorcinaldehyde by the non-reducing polyketide synthase (PKS) tropA. 3-methylorcinaldehyde is the substrate for the FAD-dependent monooxygenase tropB to yield a dearomatized hydroxycyclohexadione. The 2-oxoglutarate-dependent dioxygenase tropC then performs the oxidative ring expansion to provide the first tropolone metabolite stipitaldehyde. Trop D converts stipitaldehyde into stipitacetal which is in turn converted to stipitalide by the short-chain dehydrogenase/reductase tropE. The next steps involve tropF, tropG, tropH, tropI and tropJ to form successive tropolone maleic anhydrides including stipitaldehydic, stipitatonic and stipitatic acids. This is 3-methylorcinaldehyde synthase tropA from Talaromyces stipitatus (strain ATCC 10500 / CBS 375.48 / QM 6759 / NRRL 1006) (Penicillium stipitatum).